The chain runs to 453 residues: Probable 1,4-beta-D-glucan cellobiohydrolase A (453 aa).

Positions 1-17 (MYQRALLFSALATAVSA) are cleaved as a signal peptide. Residue E226 is the Nucleophile of the active site. E231 (proton donor) is an active-site residue. N-linked (GlcNAc...) asparagine glycosylation occurs at N284.

The protein belongs to the glycosyl hydrolase 7 (cellulase C) family.

It is found in the secreted. The catalysed reaction is Hydrolysis of (1-&gt;4)-beta-D-glucosidic linkages in cellulose and cellotetraose, releasing cellobiose from the non-reducing ends of the chains.. The biological conversion of cellulose to glucose generally requires three types of hydrolytic enzymes: (1) Endoglucanases which cut internal beta-1,4-glucosidic bonds; (2) Exocellobiohydrolases that cut the disaccharide cellobiose from the non-reducing end of the cellulose polymer chain; (3) Beta-1,4-glucosidases which hydrolyze the cellobiose and other short cello-oligosaccharides to glucose. This chain is Probable 1,4-beta-D-glucan cellobiohydrolase A (cbhA), found in Aspergillus clavatus (strain ATCC 1007 / CBS 513.65 / DSM 816 / NCTC 3887 / NRRL 1 / QM 1276 / 107).